Consider the following 146-residue polypeptide: Holo-[acyl-carrier-protein] synthase (146 aa).

2 residues coordinate Mg(2+): D8 and E61.

The protein belongs to the P-Pant transferase superfamily. AcpS family. Requires Mg(2+) as cofactor.

It localises to the cytoplasm. The catalysed reaction is apo-[ACP] + CoA = holo-[ACP] + adenosine 3',5'-bisphosphate + H(+). Functionally, transfers the 4'-phosphopantetheine moiety from coenzyme A to a Ser of acyl-carrier-protein. This is Holo-[acyl-carrier-protein] synthase from Rhodopseudomonas palustris (strain TIE-1).